A 560-amino-acid chain; its full sequence is Terminal uridylyltransferase Tailor (560 aa).

The disordered stretch occupies residues 169–197 (EQHPKPNPNNQPVQPHPTHQTKQEKKQAQ). Residues 176 to 188 (PNNQPVQPHPTHQ) show a composition bias toward low complexity. The Mg(2+) site is built by Asp278 and Asp280. Residues 455–522 (LRNFFAYFAK…VVQDPIQLNH (68 aa)) form the PAP-associated domain.

Mg(2+) is required as a cofactor.

The protein resides in the cytoplasm. It carries out the reaction RNA(n) + UTP = RNA(n)-3'-uridine ribonucleotide + diphosphate. Its function is as follows. Uridylyltransferase which mediates terminal uridylation of miRNAs, leading to their degradation. Has high specificity for splicing-derived miRNAs (mirtrons) and other miRNA substrates containing a 3'-G terminal nucleotide. Appears to be a major suppressor of mirtron biogenesis. The chain is Terminal uridylyltransferase Tailor from Drosophila melanogaster (Fruit fly).